A 250-amino-acid polypeptide reads, in one-letter code: Golgi SNAP receptor complex member 1 (250 aa).

Ala2 carries the post-translational modification N-acetylalanine. At 2–229 (AAGTSSYWED…QRINLRKRRD (228 aa)) the chain is on the cytoplasmic side. Residues 9–30 (WEDLRKQARQLENELDLKLVSF) adopt a coiled-coil conformation. Positions 38–59 (SHSSTRDGRRDRYSSDTTPLLN) are disordered. The span at 41–51 (STRDGRRDRYS) shows a compositional bias: basic and acidic residues. A coiled-coil region spans residues 68-95 (ETMAIEIEQLLARLTGVNDKMAEYTNSA). Residue Ser141 is modified to Phosphoserine. A helical; Anchor for type IV membrane protein transmembrane segment spans residues 230–250 (SLILGGVIGICTILLLLYAFH).

The protein belongs to the GOSR1 family. As to quaternary structure, component of several multiprotein Golgi SNARE complexes. Identified in a SNARE complex with BET1, STX5 and YKT6, in a SNARE complex with BET1L, STX5 and YKT6, in a SNARE complex with STX5, GOSR2, SEC22B and BET1, and in complex with STX5 and COG3. Interacts with GABARAPL2.

The protein localises to the golgi apparatus membrane. Its function is as follows. Involved in transport from the ER to the Golgi apparatus as well as in intra-Golgi transport. It belongs to a super-family of proteins called t-SNAREs or soluble NSF (N-ethylmaleimide-sensitive factor) attachment protein receptor. May play a protective role against hydrogen peroxide induced cytotoxicity under glutathione depleted conditions in neuronal cells by regulating the intracellular ROS levels via inhibition of p38 MAPK (MAPK11, MAPK12, MAPK13 and MAPK14). Participates in docking and fusion stage of ER to cis-Golgi transport. Plays an important physiological role in VLDL-transport vesicle-Golgi fusion and thus in VLDL delivery to the hepatic cis-Golgi. The polypeptide is Golgi SNAP receptor complex member 1 (GOSR1) (Homo sapiens (Human)).